Reading from the N-terminus, the 545-residue chain is Tripartite motif-containing protein 55 (545 aa).

Residues 26-82 (CPICLEMFTKPVVILPCQHNLCRKCASDIFQASNPYLPTRGGTTVASGGRFRCPSCR) form an RING-type zinc finger. The segment at 119-161 (LDQPMCEEHEEERINIYCLNCEVPTCSLCKVFGAHKDCQVAPL) adopts a B box-type zinc-finger fold. Residues Cys124, His127, Cys147, and His153 each contribute to the Zn(2+) site. Positions 219–258 (YSILEERKTEMTQAITRTQEEKLEHVRTLIRKYSDHLENV) form a coiled coil. One can recognise a COS domain in the interval 269–327 (MDEPEMAVFLQNAKTLLQKITEASKAFQMEKIEQGYEIMNNFTVNLNREEKIIREIDFS). 2 disordered regions span residues 324-378 (IDFS…SELA) and 406-528 (LVTQ…GADS). Residues 328–355 (REEEDEDDEGEVDEEGEGEDAVEVEEAE) show a composition bias toward acidic residues. Low complexity-rich tracts occupy residues 417 to 426 (SQQTTQSETS) and 469 to 493 (SAAE…AAVS). Positions 495–506 (KESSSTAATSQI) are enriched in polar residues. Low complexity predominate over residues 510–520 (ASSPQGQAAAL).

As to quaternary structure, homooligomer and heterooligomer. Interacts with titin/TTN. Interacts with myosins. Interacts with SQSTM1 and NBR1. Probably interacts with TRIM63 and TRIM54. Post-translationally, targeted for degradation through the proteasomal and lysosomal pathways in the presence of SUMO3.

The protein localises to the nucleus. It is found in the cytoplasm. The enzyme catalyses S-ubiquitinyl-[E2 ubiquitin-conjugating enzyme]-L-cysteine + [acceptor protein]-L-lysine = [E2 ubiquitin-conjugating enzyme]-L-cysteine + N(6)-ubiquitinyl-[acceptor protein]-L-lysine.. In terms of biological role, E3 ubiquitin ligase that plays an important role in regulating cardiac development and contractility, muscle growth, metabolism, and fiber-type differentiation. Acts as a critical factor that regulates cardiomyocyte size during development in concert with TRIM63 by regulating E2F1-mediated gene expression. Plays a role in apoptosis induction in cardiomyocytes by promoting ubiquitination of the DUSP1 phosphatase. Promotes non-canonical NF-kappa-B signaling and B-cell-mediated immune responses by mediating NFKB2 'Lys-48'-linked ubiquitination and processing. In turn, NFKB2 is further processed by valosin-containing protein/VCP, an ATPase that mediates ubiquitin-dependent protein degradation by the proteasome. May play a role in preventing macrophages from producing inflammatory factors and migrating by downregulating the level of nuclear NF-kappa-B subunit RELA. Also modifies PPARG via polyubiquitination and accelerates PPARG proteasomal degradation to inhibit its activity. This is Tripartite motif-containing protein 55 (Trim55) from Rattus norvegicus (Rat).